A 644-amino-acid chain; its full sequence is 3D-(3,5/4)-trihydroxycyclohexane-1,2-dione hydrolase (644 aa).

Thiamine diphosphate is bound at residue E65. A thiamine pyrophosphate binding region spans residues 442-522 (SLPGDLQRMW…INVLLFDNSG (81 aa)). Mg(2+)-binding residues include D493 and N520.

It belongs to the TPP enzyme family. The cofactor is Mg(2+). Requires thiamine diphosphate as cofactor.

The enzyme catalyses 3D-3,5/4-trihydroxycyclohexane-1,2-dione + H2O = 5-deoxy-D-glucuronate + H(+). The protein operates within polyol metabolism; myo-inositol degradation into acetyl-CoA; acetyl-CoA from myo-inositol: step 3/7. Involved in the cleavage of the C1-C2 bond of 3D-(3,5/4)-trihydroxycyclohexane-1,2-dione (THcHDO) to yield 5-deoxy-glucuronate (5DG). This is 3D-(3,5/4)-trihydroxycyclohexane-1,2-dione hydrolase from Bacillus thuringiensis (strain Al Hakam).